Consider the following 645-residue polypeptide: MALVRDPEPAAGSSRWLPTHVQVTVLRASGLRGKSSGAGSTSDAYTVIQVGREKYSTSVVEKTQGCPEWCEECSFELPPGALDGLLRAQEADAGPAPWASGPNAACELVLTTMHRSLIGVDKFLGRATVALDEVFRAGRAQHTQWYRLHSKPGKKEKERGEIQVTIQFTRNNLSASMFDLSMKDKPRSPFSKLKDRVKGKKKYDLESASAILPSSALEDPELGSLGKMGKAKGFFLRNKLRKSSLTQSNTSLGSDSTLSSTSGSLVYQGPGAELLTRSPSHSSWLSTEGGRDSIQSPKLLTHKRTYSDEASQLRAAPPRALLELQGHLDGASRSSLCVNGSHVYNEEPQPPLRHRSSISGPFPPSSSLHSVPPRSSEEGSRSSDDSWGRGSHGTSSSEAVPGQEELSKQAKGASCSGEEEGARLPEGKPVQVATPMVASSEAVAAEKDRKPRMGLFHHHHHQGLSRSEQGRRGSVGEKGSPSLGASPHHSSTGEEKAKSSWFGLRESKEPTQKPSPHPVKPLTAAPVEASPDRKQPRTSLSTALSSGLERLKTVTSGGIQSVLPASQLGSSVDTKRPKDSAVLDQSAKYYHLTHDELIGLLLQRERELSQRDEHVQELESYIDRLLVRIMETSPTLLQISPGPPK.

One can recognise a C2 domain in the interval 1 to 146 (MALVRDPEPA…AGRAQHTQWY (146 aa)). S176, S283, S286, S307, S357, and S367 each carry phosphoserine. A disordered region spans residues 271-299 (GAELLTRSPSHSSWLSTEGGRDSIQSPKL). Residues 277-286 (RSPSHSSWLS) show a composition bias toward polar residues. The segment at 341–550 (SHVYNEEPQP…STALSSGLER (210 aa)) is disordered. Positions 357 to 374 (SISGPFPPSSSLHSVPPR) are enriched in low complexity. The span at 375 to 387 (SSEEGSRSSDDSW) shows a compositional bias: basic and acidic residues. Phosphoserine is present on residues S391 and S395. Over residues 452 to 463 (RMGLFHHHHHQG) the composition is skewed to basic residues. A phosphoserine mark is found at S486, S530, S539, S545, and S640. The 63-residue stretch at 578–640 (KDSAVLDQSA…ETSPTLLQIS (63 aa)) folds into the FIP-RBD domain.

Interacts with RAB11FIP4. Interacts with NAPG. Interacts with RO60. Interacts with RAB11A that has been activated by GTP binding. In terms of processing, phosphorylated on serine and threonine residues. Phosphorylation at Ser-357 is PKA-dependent.

The protein localises to the cytoplasm. It localises to the recycling endosome membrane. It is found in the early endosome membrane. Its subcellular location is the golgi apparatus membrane. The protein resides in the cytoplasmic vesicle. The protein localises to the secretory vesicle membrane. It localises to the mitochondrion membrane. Functionally, rab effector involved in protein trafficking from apical recycling endosomes to the apical plasma membrane. Involved in insulin granule exocytosis. May regulate V-ATPase intracellular transport in response to extracellular acidosis. The polypeptide is Rab11 family-interacting protein 5 (Mus musculus (Mouse)).